Consider the following 210-residue polypeptide: HTH-type transcriptional repressor FabR (210 aa).

Residues 10–70 enclose the HTH tetR-type domain; that stretch reads KTRRSLVEAA…TMVDESGLML (61 aa). Positions 33-52 form a DNA-binding region, H-T-H motif; it reads SLREVAREAGIAPTSFYRHF.

In terms of assembly, homodimer.

It localises to the cytoplasm. Represses the transcription of fabB, involved in unsaturated fatty acid (UFA) biosynthesis. By controlling UFA production, FabR directly influences the physical properties of the membrane bilayer. The polypeptide is HTH-type transcriptional repressor FabR (Salmonella arizonae (strain ATCC BAA-731 / CDC346-86 / RSK2980)).